A 273-amino-acid polypeptide reads, in one-letter code: MSNHLPGVFIVSDSIGETAEMVVRAAASQFNSGNMEIRQVPNISDTETLEEIINQAAASNFIIAYTLVINELADFLKMEARKKGVICVDVLGPVIEAFKSVSDIEPRREPGLLRKVDEMYYRRVEAVEFAVRYDDGKDPRGVMQSDIVLVGVSRTSKTPLSMYLAHKRIKVANVPLVPEVEPPEEIFQVEKGKVIGLVINPEQLNQIRTERLKTLGLKGQASYANLERILEEMEYAQEIMKRLGCPVIDVTNRAVEETASKILEIYYRRLSHV.

151–158 (GVSRTSKT) contributes to the ADP binding site.

The protein belongs to the pyruvate, phosphate/water dikinase regulatory protein family. PDRP subfamily.

The enzyme catalyses N(tele)-phospho-L-histidyl/L-threonyl-[pyruvate, phosphate dikinase] + ADP = N(tele)-phospho-L-histidyl/O-phospho-L-threonyl-[pyruvate, phosphate dikinase] + AMP + H(+). It catalyses the reaction N(tele)-phospho-L-histidyl/O-phospho-L-threonyl-[pyruvate, phosphate dikinase] + phosphate + H(+) = N(tele)-phospho-L-histidyl/L-threonyl-[pyruvate, phosphate dikinase] + diphosphate. In terms of biological role, bifunctional serine/threonine kinase and phosphorylase involved in the regulation of the pyruvate, phosphate dikinase (PPDK) by catalyzing its phosphorylation/dephosphorylation. This chain is Putative pyruvate, phosphate dikinase regulatory protein 2, found in Syntrophomonas wolfei subsp. wolfei (strain DSM 2245B / Goettingen).